We begin with the raw amino-acid sequence, 420 residues long: Glucose-1-phosphate adenylyltransferase (420 aa).

Alpha-D-glucose 1-phosphate contacts are provided by residues tyrosine 97, glycine 162, 177–178 (EK), and serine 188.

This sequence belongs to the bacterial/plant glucose-1-phosphate adenylyltransferase family. Homotetramer.

The enzyme catalyses alpha-D-glucose 1-phosphate + ATP + H(+) = ADP-alpha-D-glucose + diphosphate. Its pathway is glycan biosynthesis; glycogen biosynthesis. Functionally, involved in the biosynthesis of ADP-glucose, a building block required for the elongation reactions to produce glycogen. Catalyzes the reaction between ATP and alpha-D-glucose 1-phosphate (G1P) to produce pyrophosphate and ADP-Glc. The polypeptide is Glucose-1-phosphate adenylyltransferase (Pseudothermotoga lettingae (strain ATCC BAA-301 / DSM 14385 / NBRC 107922 / TMO) (Thermotoga lettingae)).